The sequence spans 566 residues: Glucose starvation modulator protein 1 (566 aa).

The segment at residues 20–48 (CVFCHQKHLQCSNERPCKNCVKRNIAHGC) is a DNA-binding region (zn(2)-C6 fungal-type). Disordered stretches follow at residues 65–93 (PGAV…PMDS) and 250–270 (KQAS…NTLS). Polar residues predominate over residues 83–93 (PVSTSVSPMDS). Residues 253 to 270 (SPSPSNTSTSENNTNTLS) show a composition bias toward low complexity.

It belongs to the ERT1/acuK family.

Its subcellular location is the nucleus. In terms of biological role, transcription factor which regulates nonfermentable carbon utilization. The sequence is that of Glucose starvation modulator protein 1 (ZCF23) from Candida albicans (strain SC5314 / ATCC MYA-2876) (Yeast).